The following is a 118-amino-acid chain: Ribosome-binding factor A (118 aa).

Belongs to the RbfA family. As to quaternary structure, monomer. Binds 30S ribosomal subunits, but not 50S ribosomal subunits or 70S ribosomes.

Its subcellular location is the cytoplasm. One of several proteins that assist in the late maturation steps of the functional core of the 30S ribosomal subunit. Associates with free 30S ribosomal subunits (but not with 30S subunits that are part of 70S ribosomes or polysomes). Required for efficient processing of 16S rRNA. May interact with the 5'-terminal helix region of 16S rRNA. The protein is Ribosome-binding factor A of Thermodesulfovibrio yellowstonii (strain ATCC 51303 / DSM 11347 / YP87).